We begin with the raw amino-acid sequence, 376 residues long: Cytochrome b (376 aa).

4 consecutive transmembrane segments (helical) span residues 28–48 (YGFL…FLAS), 72–94 (WCFR…LHIL), 107–127 (SWIS…IGYV), and 169–189 (FFVL…IHIF). Heme b-binding residues include His78 and His92. His173 and His187 together coordinate heme b. A ubiquinone is bound at residue His192. Transmembrane regions (helical) follow at residues 214-234 (LLSL…IQSI), 274-294 (IPSK…LFLL), 317-337 (VPII…CQLP), and 340-360 (IFIL…LFAL).

The protein belongs to the cytochrome b family. As to quaternary structure, the main subunits of complex b-c1 are: cytochrome b, cytochrome c1 and the Rieske protein. Requires heme b as cofactor.

Its subcellular location is the mitochondrion inner membrane. Functionally, component of the ubiquinol-cytochrome c reductase complex (complex III or cytochrome b-c1 complex) that is part of the mitochondrial respiratory chain. The b-c1 complex mediates electron transfer from ubiquinol to cytochrome c. Contributes to the generation of a proton gradient across the mitochondrial membrane that is then used for ATP synthesis. This Plasmodium chabaudi protein is Cytochrome b (MT-CYB).